A 420-amino-acid chain; its full sequence is E3 ubiquitin-protein ligase pellino homolog 2 (420 aa).

The region spanning 15 to 202 (EPVKYGELVV…MHPRGGFTEE (188 aa)) is the FHA; atypical domain.

It belongs to the pellino family. Interacts with TRAF6, IRAK1, IRAK4 and MAP3K7. Interacts with BCL10; this interaction is impaired by SOCS3. Phosphorylated by IRAK1 and IRAK4 enhancing its E3 ligase activity.

The catalysed reaction is S-ubiquitinyl-[E2 ubiquitin-conjugating enzyme]-L-cysteine + [acceptor protein]-L-lysine = [E2 ubiquitin-conjugating enzyme]-L-cysteine + N(6)-ubiquitinyl-[acceptor protein]-L-lysine.. The protein operates within protein modification; protein ubiquitination. In terms of biological role, E3 ubiquitin ligase catalyzing the covalent attachment of ubiquitin moieties onto substrate proteins. Involved in the TLR and IL-1 signaling pathways via interaction with the complex containing IRAK kinases and TRAF6. Mediates IL1B-induced IRAK1 'Lys-63'-linked polyubiquitination and possibly 'Lys-48'-linked ubiquitination. May be important for LPS- and IL1B-induced MAP3K7-dependent, but not MAP3K3-dependent, NF-kappa-B activation. Can activate the MAP (mitogen activated protein) kinase pathway leading to activation of ELK1. This is E3 ubiquitin-protein ligase pellino homolog 2 (PELI2) from Homo sapiens (Human).